We begin with the raw amino-acid sequence, 240 residues long: Uridylate kinase (240 aa).

ATP is bound at residue 13–16; sequence KASG. Positions 21–26 are involved in allosteric activation by GTP; it reads GSQGFG. Position 55 (G55) interacts with UMP. Residues G56 and R60 each coordinate ATP. UMP is bound by residues D75 and 136 to 143; that span reads TGNPFFTT. Residues T163, Q164, Y169, and D172 each coordinate ATP.

Belongs to the UMP kinase family. In terms of assembly, homohexamer.

It is found in the cytoplasm. The enzyme catalyses UMP + ATP = UDP + ADP. Its pathway is pyrimidine metabolism; CTP biosynthesis via de novo pathway; UDP from UMP (UMPK route): step 1/1. With respect to regulation, allosterically activated by GTP. Inhibited by UTP. In terms of biological role, catalyzes the reversible phosphorylation of UMP to UDP. This Brucella suis biovar 1 (strain 1330) protein is Uridylate kinase.